Here is a 416-residue protein sequence, read N- to C-terminus: Gamma-glutamyl phosphate reductase (416 aa).

This sequence belongs to the gamma-glutamyl phosphate reductase family.

It is found in the cytoplasm. The enzyme catalyses L-glutamate 5-semialdehyde + phosphate + NADP(+) = L-glutamyl 5-phosphate + NADPH + H(+). The protein operates within amino-acid biosynthesis; L-proline biosynthesis; L-glutamate 5-semialdehyde from L-glutamate: step 2/2. In terms of biological role, catalyzes the NADPH-dependent reduction of L-glutamate 5-phosphate into L-glutamate 5-semialdehyde and phosphate. The product spontaneously undergoes cyclization to form 1-pyrroline-5-carboxylate. In Streptococcus uberis (strain ATCC BAA-854 / 0140J), this protein is Gamma-glutamyl phosphate reductase.